The sequence spans 255 residues: Na(+)-translocating NADH-quinone reductase subunit C (255 aa).

A helical membrane pass occupies residues 12–32; it reads LFVVIALSLVCSIIVSTAAVG. Thr223 is subject to FMN phosphoryl threonine.

It belongs to the NqrC family. As to quaternary structure, composed of six subunits; NqrA, NqrB, NqrC, NqrD, NqrE and NqrF. FMN serves as cofactor.

The protein resides in the cell inner membrane. It carries out the reaction a ubiquinone + n Na(+)(in) + NADH + H(+) = a ubiquinol + n Na(+)(out) + NAD(+). Functionally, NQR complex catalyzes the reduction of ubiquinone-1 to ubiquinol by two successive reactions, coupled with the transport of Na(+) ions from the cytoplasm to the periplasm. NqrA to NqrE are probably involved in the second step, the conversion of ubisemiquinone to ubiquinol. The chain is Na(+)-translocating NADH-quinone reductase subunit C from Vibrio anguillarum (Listonella anguillarum).